The sequence spans 318 residues: Glycine--tRNA ligase alpha subunit (318 aa).

A disordered region spans residues glutamate 298–glutamine 318. Positions glycine 300–glutamine 309 are enriched in polar residues.

This sequence belongs to the class-II aminoacyl-tRNA synthetase family. Tetramer of two alpha and two beta subunits.

It is found in the cytoplasm. The enzyme catalyses tRNA(Gly) + glycine + ATP = glycyl-tRNA(Gly) + AMP + diphosphate. The polypeptide is Glycine--tRNA ligase alpha subunit (Rhodopseudomonas palustris (strain BisB18)).